The sequence spans 350 residues: 4-hydroxy-3-methylbut-2-enyl diphosphate reductase (350 aa).

Cysteine 19 provides a ligand contact to [4Fe-4S] cluster. Positions 48 and 84 each coordinate (2E)-4-hydroxy-3-methylbut-2-enyl diphosphate. Dimethylallyl diphosphate-binding residues include histidine 48 and histidine 84. The isopentenyl diphosphate site is built by histidine 48 and histidine 84. Cysteine 106 lines the [4Fe-4S] cluster pocket. Residue histidine 134 coordinates (2E)-4-hydroxy-3-methylbut-2-enyl diphosphate. Histidine 134 is a dimethylallyl diphosphate binding site. An isopentenyl diphosphate-binding site is contributed by histidine 134. Glutamate 136 functions as the Proton donor in the catalytic mechanism. Threonine 175 contributes to the (2E)-4-hydroxy-3-methylbut-2-enyl diphosphate binding site. Residue cysteine 205 coordinates [4Fe-4S] cluster. (2E)-4-hydroxy-3-methylbut-2-enyl diphosphate is bound by residues serine 233, serine 234, asparagine 235, and serine 278. Dimethylallyl diphosphate-binding residues include serine 233, serine 234, asparagine 235, and serine 278. Serine 233, serine 234, asparagine 235, and serine 278 together coordinate isopentenyl diphosphate.

This sequence belongs to the IspH family. [4Fe-4S] cluster serves as cofactor.

It catalyses the reaction isopentenyl diphosphate + 2 oxidized [2Fe-2S]-[ferredoxin] + H2O = (2E)-4-hydroxy-3-methylbut-2-enyl diphosphate + 2 reduced [2Fe-2S]-[ferredoxin] + 2 H(+). It carries out the reaction dimethylallyl diphosphate + 2 oxidized [2Fe-2S]-[ferredoxin] + H2O = (2E)-4-hydroxy-3-methylbut-2-enyl diphosphate + 2 reduced [2Fe-2S]-[ferredoxin] + 2 H(+). The protein operates within isoprenoid biosynthesis; dimethylallyl diphosphate biosynthesis; dimethylallyl diphosphate from (2E)-4-hydroxy-3-methylbutenyl diphosphate: step 1/1. Its pathway is isoprenoid biosynthesis; isopentenyl diphosphate biosynthesis via DXP pathway; isopentenyl diphosphate from 1-deoxy-D-xylulose 5-phosphate: step 6/6. Functionally, catalyzes the conversion of 1-hydroxy-2-methyl-2-(E)-butenyl 4-diphosphate (HMBPP) into a mixture of isopentenyl diphosphate (IPP) and dimethylallyl diphosphate (DMAPP). Acts in the terminal step of the DOXP/MEP pathway for isoprenoid precursor biosynthesis. The sequence is that of 4-hydroxy-3-methylbut-2-enyl diphosphate reductase from Brucella anthropi (strain ATCC 49188 / DSM 6882 / CCUG 24695 / JCM 21032 / LMG 3331 / NBRC 15819 / NCTC 12168 / Alc 37) (Ochrobactrum anthropi).